Here is a 92-residue protein sequence, read N- to C-terminus: Transcription factor S4 (92 aa).

The ZR-N stretch occupies residues 1 to 31; sequence MRFCPKCGSFLKVKGNKMVCSKCGYSDHDVE. Zn(2+) contacts are provided by cysteine 4, cysteine 7, cysteine 20, and cysteine 23. Positions 32 to 56 are flexible linker; it reads KVILKENVAHENDKTIIADGETIEG. The ZR-C stretch occupies residues 55-92; that stretch reads EGRVAISLCPRCGSVRAILLNKKKRLYRCMTCNFVYNI. Residues cysteine 63 and cysteine 66 each contribute to the Zn(2+) site. Residues lysine 76, lysine 77, and lysine 78 contribute to the active site. Zn(2+) is bound by residues cysteine 83 and cysteine 86.

It belongs to the archaeal RpoM/eukaryotic RPA12/RPB9/RPC11 RNA polymerase family. In terms of assembly, interacts with RNA polymerase. Requires Zn(2+) as cofactor.

A potent inhibitor of RNA polymerase (RNAP) probably involved in viral defense. Destabilizes the transcription pre-initiation complex of TBP, TFB, DNA and RNAP, inhibits abortive transcription initiation, productive initiation and transcription elongation. Increases the RNAP KM for NTPs about 50-fold. Overexpression of TFS1-tip4 (TFS1 with the active tip of this protein, phenocopies this protein) in S.acidocaldarius MW001 leads to severe growth inhibition. When bound to RNAP induces conformational changes that widen the DNA-binding channel, probably destabilizing the interaction of DNA with RNAP. The chain is Transcription factor S4 from Saccharolobus solfataricus (strain ATCC 35092 / DSM 1617 / JCM 11322 / P2) (Sulfolobus solfataricus).